The chain runs to 659 residues: Cytochrome bo(3) ubiquinol oxidase subunit 1 (659 aa).

Topologically, residues 1-14 (MFGKLSLNSIPYHD) are extracellular. The chain crosses the membrane as a helical span at residues 15–35 (PIIMITCCVVILVFLVISIII). Topologically, residues 36–56 (TIAQKWQYLWNEWCCTVDHKK) are cytoplasmic. Residues 57–77 (IAKMYIFLAFIMLFRGFADAI) traverse the membrane as a helical segment. The a ubiquinone site is built by Arg-71, Asp-75, and His-101. Over 78–109 (MMRMQQFLVSSYHGNGTGFLPPHHYDQIFTAH) the chain is Extracellular. His-109 provides a ligand contact to heme b. A helical membrane pass occupies residues 110-130 (GVIMIFFVAMPLVIGLMNFVV). Residues 131-148 (PLQIGSRDVAFPFLNNLS) lie on the Cytoplasmic side of the membrane. The helical transmembrane segment at 149 to 169 (LWLTIFSALLMNVSLGIGEFA) threads the bilayer. At 170 to 192 (QTGWLAYPPLSELQYSPGVGVDY) the chain is on the extracellular side. Position 173 (Trp-173) interacts with heme b. A helical membrane pass occupies residues 193–213 (WIWSLQISGIGTTLTAINFLV). The Cytoplasmic portion of the chain corresponds to 214-235 (TIIKMRSSGMNWFKIPVFTWTS). Residues 236-256 (FCTNILIIASFPVLTVSLLLL) form a helical membrane-spanning segment. The Extracellular segment spans residues 257 to 280 (TLDRYLGFHFFTNDFGGNMMMYVN). The chain crosses the membrane as a helical span at residues 281–301 (LIWIWGHPEVYILILPVFGIF). His-287 contributes to the Cu(2+) binding site. Residues 287 to 291 (HPEVY) constitute a cross-link (1'-histidyl-3'-tyrosine (His-Tyr)). Tyr-291 contacts Fe(II)-heme o. The Cytoplasmic portion of the chain corresponds to 302 to 318 (SEVVATFSSKELFGYTS). Residues 319 to 339 (LIWATIVITILSFIVWLHHFF) traverse the membrane as a helical segment. Cu(2+) contacts are provided by His-336 and His-337. Residues 340-350 (TMGASANVNAF) lie on the Extracellular side of the membrane. A helical transmembrane segment spans residues 351-371 (FGITTMIISIPTGVKIFNWLF). Over 372–382 (TMYRGNVRINS) the chain is Cytoplasmic. A helical membrane pass occupies residues 383–403 (IMLWTIGFLITFSIGGMAGVL). Residues 404-416 (LSLPVIDFSLHNS) lie on the Extracellular side of the membrane. The Fe(II)-heme o site is built by His-414 and His-422. A helical membrane pass occupies residues 417–437 (LFLVAHFHNVIIGGVVFGCFA). His-424 provides a ligand contact to heme b. Residues 438 to 459 (GITYWFPKLFGFMLSEKWGKRA) are Cytoplasmic-facing. A helical transmembrane segment spans residues 460 to 480 (FWCWFFGFFCAFMPLYALGLM). Residues 481–499 (GMTRRLSQNINPQFHSMLT) lie on the Extracellular side of the membrane. Positions 484 and 485 each coordinate heme b. Residues 500 to 520 (IAALGTILIFIGIVFQIIQIF) form a helical membrane-spanning segment. At 521–587 (VSIRDRNLNR…KLPILYTSFH (67 aa)) the chain is on the cytoplasmic side. Residues 588–608 (MPKNTKFGFLIGFFAFLLGFS) form a helical membrane-spanning segment. Ala-609 is a topological domain (extracellular). A helical transmembrane segment spans residues 610–630 (VWYIFWLFFISFFVIIYLLVI). Residues 631–659 (KSLDTNCDYIISIEEIKEIEKCINIKKMD) are Cytoplasmic-facing.

It belongs to the heme-copper respiratory oxidase family. In terms of assembly, the cytochrome bo(3) ubiquinol oxidase complex is a heterooctamer of two A chains, two B chains, two C chains and two D chains. The cofactor is Cu(2+). Requires heme b as cofactor. Fe(II)-heme o serves as cofactor.

The protein resides in the cell membrane. It carries out the reaction 2 a ubiquinol + O2 + n H(+)(in) = 2 a ubiquinone + 2 H2O + n H(+)(out). Functionally, cytochrome bo(3) ubiquinol oxidase is the terminal enzyme in the aerobic respiratory chain. Catalyzes the four-electron reduction of O2 to water, using a ubiquinol as a membrane soluble electron donor for molecular oxygen reduction. Has proton pump activity across the membrane in addition to electron transfer, pumping 2 protons/electron and generating a proton motive force. All the redox centers of this enzyme complex are located within the largest subunit, subunit I. Protons are probably pumped via D- and K- channels found in this subunit. In Buchnera aphidicola subsp. Baizongia pistaciae (strain Bp), this protein is Cytochrome bo(3) ubiquinol oxidase subunit 1 (cyoB).